Reading from the N-terminus, the 386-residue chain is MSVIKMTDLDLAGKRVFIRADLNVPVKDGKVTSDARIIASLPTIKLCLEAGAKVMVTSHLGRPTEGEYAEEFSLQPVVNYLNDALDCEVKLAKDYLDGLELNAGELVVLENVRFNKGEKKNDEELSKKYAALCDVFVMDAFGTAHRAQASTHGVGMFAEVACAGPLLAAELEALGKAMSNPERPLVAIVGGSKVSTKLTVLESLSKIADQLVVGGGIANTFIAAEGHNVGKSLYEADLVETAQKLMKECAIPVATDVACAKAFDENAEAEIKHVSEVQDDDMIFDLGPDSTAALAEIIANAKTILWNGPVGVFEFKNFEAGTKGISEAIAQSPAFSVAGGGDTLAAIDKFGIKADVSYISTGGGAFLEFVEGKVLPAVEMLEARAK.

Substrate-binding positions include 21-23 (DLN), Arg36, 59-62 (HLGR), Arg113, and Arg146. ATP is bound by residues Lys197, Glu314, and 340–343 (GGDT).

Belongs to the phosphoglycerate kinase family. Monomer.

The protein localises to the cytoplasm. The catalysed reaction is (2R)-3-phosphoglycerate + ATP = (2R)-3-phospho-glyceroyl phosphate + ADP. It participates in carbohydrate degradation; glycolysis; pyruvate from D-glyceraldehyde 3-phosphate: step 2/5. In Vibrio vulnificus (strain CMCP6), this protein is Phosphoglycerate kinase.